A 130-amino-acid polypeptide reads, in one-letter code: Holo-[acyl-carrier-protein] synthase (130 aa).

Mg(2+) is bound by residues Asp-8 and Glu-62.

Belongs to the P-Pant transferase superfamily. AcpS family. Mg(2+) is required as a cofactor.

The protein localises to the cytoplasm. It catalyses the reaction apo-[ACP] + CoA = holo-[ACP] + adenosine 3',5'-bisphosphate + H(+). Functionally, transfers the 4'-phosphopantetheine moiety from coenzyme A to a Ser of acyl-carrier-protein. The protein is Holo-[acyl-carrier-protein] synthase of Herminiimonas arsenicoxydans.